The following is a 270-amino-acid chain: Putative pyruvate, phosphate dikinase regulatory protein 2 (270 aa).

151–158 (GVSRTSKT) lines the ADP pocket.

This sequence belongs to the pyruvate, phosphate/water dikinase regulatory protein family. PDRP subfamily.

The enzyme catalyses N(tele)-phospho-L-histidyl/L-threonyl-[pyruvate, phosphate dikinase] + ADP = N(tele)-phospho-L-histidyl/O-phospho-L-threonyl-[pyruvate, phosphate dikinase] + AMP + H(+). It catalyses the reaction N(tele)-phospho-L-histidyl/O-phospho-L-threonyl-[pyruvate, phosphate dikinase] + phosphate + H(+) = N(tele)-phospho-L-histidyl/L-threonyl-[pyruvate, phosphate dikinase] + diphosphate. Functionally, bifunctional serine/threonine kinase and phosphorylase involved in the regulation of the pyruvate, phosphate dikinase (PPDK) by catalyzing its phosphorylation/dephosphorylation. In Listeria monocytogenes serovar 1/2a (strain ATCC BAA-679 / EGD-e), this protein is Putative pyruvate, phosphate dikinase regulatory protein 2.